Consider the following 239-residue polypeptide: Geranylgeranylglyceryl phosphate synthase (239 aa).

Residues D18 and S45 each coordinate Mg(2+). Residues 166–172 (YLEAGSG), 197–198 (GG), and 219–220 (GT) each bind sn-glycerol 1-phosphate.

Belongs to the GGGP/HepGP synthase family. Group II subfamily. Mg(2+) is required as a cofactor.

The protein localises to the cytoplasm. The enzyme catalyses sn-glycerol 1-phosphate + (2E,6E,10E)-geranylgeranyl diphosphate = sn-3-O-(geranylgeranyl)glycerol 1-phosphate + diphosphate. Its pathway is membrane lipid metabolism; glycerophospholipid metabolism. In terms of biological role, prenyltransferase that catalyzes the transfer of the geranylgeranyl moiety of geranylgeranyl diphosphate (GGPP) to the C3 hydroxyl of sn-glycerol-1-phosphate (G1P). This reaction is the first ether-bond-formation step in the biosynthesis of archaeal membrane lipids. This is Geranylgeranylglyceryl phosphate synthase from Pyrobaculum arsenaticum (strain DSM 13514 / JCM 11321 / PZ6).